A 150-amino-acid polypeptide reads, in one-letter code: Avidin-related protein 4/5 (150 aa).

The N-terminal stretch at 1–24 (MVHTTSPLLLLLLLSLALVAPSLS) is a signal peptide. One can recognise an Avidin-like domain in the interval 26–147 (RKCSLTGKWT…GYNNFTRLCT (122 aa)). Cysteine 28 and cysteine 105 are disulfide-bonded. Residues asparagine 36, serine 40, tyrosine 57, threonine 59, and aspartate 63 each coordinate biotin. 2 N-linked (GlcNAc...) asparagine glycosylation sites follow: asparagine 67 and asparagine 93. Residues serine 95 and asparagine 140 each coordinate biotin. An N-linked (GlcNAc...) asparagine glycan is attached at asparagine 141.

It belongs to the avidin/streptavidin family. As to quaternary structure, homotetramer.

The protein localises to the secreted. In terms of biological role, forms a strong non-covalent specific complex with biotin. This chain is Avidin-related protein 4/5 (AVR4), found in Gallus gallus (Chicken).